A 300-amino-acid chain; its full sequence is MAEFRSGFVCLIGRPNTGKSTLTNALVGTKVAITSMKPQTTRHTIRGIVHREGNFQIVLVDTPGLHRPRTLLGKRLNDLVRDTYTEVDLIGLCIPADEATGPGDRWIVNQIRSVAPKTILVVIVTKIDKVPKDRLSAQLVAVSDLVADSAEIVPVSAVTGEQVDVLIDVLAAALPPGPAYYSAGELTDEPEELLMAELIREAVLEGVHDELPHSLAVVIDEVSPRAGRGDLIDVHAVLYVERPSQKGIVIGKSGARLREVGIAARRQIEKLLGTNIYLDLHVNVAKNWQRNPKQLGRLGF.

The Era-type G domain occupies 5-176 (RSGFVCLIGR…IDVLAAALPP (172 aa)). A G1 region spans residues 13 to 20 (GRPNTGKS). 13–20 (GRPNTGKS) lines the GTP pocket. Residues 39 to 43 (QTTRH) form a G2 region. Residues 61 to 64 (DTPG) are G3. GTP is bound by residues 61 to 65 (DTPGL) and 125 to 128 (TKID). The tract at residues 125–128 (TKID) is G4. Residues 155–157 (VSA) are G5. The region spanning 207–286 (VHDELPHSLA…YLDLHVNVAK (80 aa)) is the KH type-2 domain.

Belongs to the TRAFAC class TrmE-Era-EngA-EngB-Septin-like GTPase superfamily. Era GTPase family. Monomer.

It localises to the cell envelope. Its subcellular location is the secreted. The protein resides in the cell wall. Functionally, exhibits GTPase activity. Binds RNA but is probably not involved in ribosome assembly in mycobacteria. The protein is GTPase Era of Mycobacterium leprae (strain TN).